Reading from the N-terminus, the 134-residue chain is Probable 4-amino-4-deoxy-L-arabinose-phosphoundecaprenol flippase subunit ArnF (134 aa).

Residues M1–R5 lie on the Cytoplasmic side of the membrane. Residues G6 to W26 traverse the membrane as a helical segment. Over S27–S45 the chain is Periplasmic. A helical membrane pass occupies residues V46–L66. The Cytoplasmic segment spans residues A67–A77. Residues Y78–F98 traverse the membrane as a helical segment. The Periplasmic portion of the chain corresponds to N99 to S101. The helical transmembrane segment at F102–T122 threads the bilayer. The Cytoplasmic segment spans residues R123–P134.

The protein belongs to the ArnF family. In terms of assembly, heterodimer of ArnE and ArnF.

It localises to the cell inner membrane. It functions in the pathway bacterial outer membrane biogenesis; lipopolysaccharide biosynthesis. Functionally, translocates 4-amino-4-deoxy-L-arabinose-phosphoundecaprenol (alpha-L-Ara4N-phosphoundecaprenol) from the cytoplasmic to the periplasmic side of the inner membrane. This chain is Probable 4-amino-4-deoxy-L-arabinose-phosphoundecaprenol flippase subunit ArnF, found in Pseudomonas fluorescens (strain Pf0-1).